Here is a 343-residue protein sequence, read N- to C-terminus: Tribbles homolog 2 (343 aa).

The interval E25–E50 is disordered. Residues S29 to S45 show a composition bias toward polar residues. The 248-residue stretch at I61 to F308 folds into the Protein kinase domain.

This sequence belongs to the protein kinase superfamily. CAMK Ser/Thr protein kinase family. Tribbles subfamily. As to expression, highly expressed in the thyroid, also present in ovary and cerebrum.

The protein localises to the cytoplasm. The protein resides in the cytoskeleton. In terms of biological role, interacts with MAPK kinases and regulates activation of MAP kinases. Does not display kinase activity. This is Tribbles homolog 2 from Canis lupus familiaris (Dog).